The chain runs to 166 residues: Endoribonuclease YbeY (166 aa).

Residues histidine 129, histidine 133, and histidine 139 each contribute to the Zn(2+) site.

Belongs to the endoribonuclease YbeY family. Zn(2+) is required as a cofactor.

It localises to the cytoplasm. Its function is as follows. Single strand-specific metallo-endoribonuclease involved in late-stage 70S ribosome quality control and in maturation of the 3' terminus of the 16S rRNA. The protein is Endoribonuclease YbeY of Mesorhizobium japonicum (strain LMG 29417 / CECT 9101 / MAFF 303099) (Mesorhizobium loti (strain MAFF 303099)).